The sequence spans 547 residues: Vacuolar fusion protein MON1 homolog B (547 aa).

An N-acetylmethionine modification is found at M1. The disordered stretch occupies residues 1–106; sequence MEAGGDTAAP…GGDPSDEEWR (106 aa). Residues 57–66 are compositionally biased toward pro residues; the sequence is PPSPSPPPQS. 2 positions are modified to phosphoserine: S59 and S61.

It belongs to the MON1/SAND family. In terms of assembly, interacts with CCNT2; down-regulates CCNT2-mediated activation of viral promoters during herpes simplex virus 1/HHV-1 infection. Found in a complex with RMC1, CCZ1 MON1A and MON1B.

The sequence is that of Vacuolar fusion protein MON1 homolog B (MON1B) from Macaca fascicularis (Crab-eating macaque).